The sequence spans 161 residues: N5-carboxyaminoimidazole ribonucleotide mutase (161 aa).

Substrate-binding residues include S9, D12, and R39.

The protein belongs to the AIR carboxylase family. Class I subfamily.

The catalysed reaction is 5-carboxyamino-1-(5-phospho-D-ribosyl)imidazole + H(+) = 5-amino-1-(5-phospho-D-ribosyl)imidazole-4-carboxylate. It participates in purine metabolism; IMP biosynthesis via de novo pathway; 5-amino-1-(5-phospho-D-ribosyl)imidazole-4-carboxylate from 5-amino-1-(5-phospho-D-ribosyl)imidazole (N5-CAIR route): step 2/2. Its function is as follows. Catalyzes the conversion of N5-carboxyaminoimidazole ribonucleotide (N5-CAIR) to 4-carboxy-5-aminoimidazole ribonucleotide (CAIR). This is N5-carboxyaminoimidazole ribonucleotide mutase from Vibrio vulnificus (strain CMCP6).